The chain runs to 184 residues: Protein DMP2 (184 aa).

4 helical membrane passes run 19-39 (LIKL…PVLT), 45-65 (LLIN…SCCF), 105-125 (VGDF…SLLD), and 142-162 (IFLM…FTVF).

It belongs to the plant DMP1 protein family. Expressed constitutively in leaves, stems, flowers, siliques and roots.

It is found in the endoplasmic reticulum membrane. The protein localises to the vacuole membrane. Functionally, involved in membrane remodeling. This chain is Protein DMP2, found in Arabidopsis thaliana (Mouse-ear cress).